The following is a 316-amino-acid chain: BTB/POZ domain-containing adapter for CUL3-mediated RhoA degradation protein 2 (316 aa).

The BTB domain occupies 28-96; it reads KYVQLNVGGS…LRDDTITLPQ (69 aa). The segment covering 268 to 279 has biased composition (polar residues); sequence EATSRSRSQASP. The interval 268–287 is disordered; that stretch reads EATSRSRSQASPSEDEETFE. Phosphoserine is present on S278. S280 bears the Phosphoserine; by CK2 mark.

Belongs to the BACURD family. In terms of assembly, component of the BCR(TNFAIP1) E3 ubiquitin ligase complex, at least composed of CUL3, TNFAIP1/BACURD2 and RBX1. Interacts with RHOA; with a preference for RhoA-GDP. Interacts with RHOB. Interacts with PCNA. Interacts with CSNK2B. Post-translationally, phosphorylation at Ser-280 by CK2 facilitates the nucleus localization and increases interaction with PCNA.

It is found in the cytoplasm. The protein localises to the nucleus. It localises to the endosome. It functions in the pathway protein modification; protein ubiquitination. Its function is as follows. Substrate-specific adapter of a BCR (BTB-CUL3-RBX1) E3 ubiquitin-protein ligase complex involved in regulation of cytoskeleton structure. The BCR(TNFAIP1) E3 ubiquitin ligase complex mediates the ubiquitination of RHOA, leading to its degradation by the proteasome, thereby regulating the actin cytoskeleton and cell migration. Its interaction with RHOB may regulate apoptosis. May enhance the PCNA-dependent DNA polymerase delta activity. The sequence is that of BTB/POZ domain-containing adapter for CUL3-mediated RhoA degradation protein 2 (TNFAIP1) from Homo sapiens (Human).